A 508-amino-acid chain; its full sequence is Photosystem II CP47 reaction center protein (508 aa).

A run of 6 helical transmembrane segments spans residues Ser21–Ser36, Ile101–Trp115, Gly140–Phe156, Ile203–Ser218, Val237–Val252, and Ser457–Arg472.

Belongs to the PsbB/PsbC family. PsbB subfamily. In terms of assembly, PSII is composed of 1 copy each of membrane proteins PsbA, PsbB, PsbC, PsbD, PsbE, PsbF, PsbH, PsbI, PsbJ, PsbK, PsbL, PsbM, PsbT, PsbX, PsbY, PsbZ, Psb30/Ycf12, at least 3 peripheral proteins of the oxygen-evolving complex and a large number of cofactors. It forms dimeric complexes. Requires Binds multiple chlorophylls. PSII binds additional chlorophylls, carotenoids and specific lipids. as cofactor.

It localises to the plastid. The protein localises to the chloroplast thylakoid membrane. Functionally, one of the components of the core complex of photosystem II (PSII). It binds chlorophyll and helps catalyze the primary light-induced photochemical processes of PSII. PSII is a light-driven water:plastoquinone oxidoreductase, using light energy to abstract electrons from H(2)O, generating O(2) and a proton gradient subsequently used for ATP formation. This chain is Photosystem II CP47 reaction center protein, found in Ipomoea purpurea (Common morning glory).